Reading from the N-terminus, the 124-residue chain is Holo-[acyl-carrier-protein] synthase (124 aa).

D5 and E51 together coordinate Mg(2+).

The protein belongs to the P-Pant transferase superfamily. AcpS family. Requires Mg(2+) as cofactor.

It is found in the cytoplasm. The enzyme catalyses apo-[ACP] + CoA = holo-[ACP] + adenosine 3',5'-bisphosphate + H(+). Functionally, transfers the 4'-phosphopantetheine moiety from coenzyme A to a Ser of acyl-carrier-protein. The polypeptide is Holo-[acyl-carrier-protein] synthase (Hydrogenobaculum sp. (strain Y04AAS1)).